Here is a 321-residue protein sequence, read N- to C-terminus: NADH-ubiquinone oxidoreductase chain 1 (321 aa).

Transmembrane regions (helical) follow at residues 6–26 (IVPPALLIISILMAVAFLTAL), 67–87 (LLATPTLFILAPTAALMLALA), 103–123 (LGLLLLLAMSSLMVYSFLWSG), 143–163 (ISYEVTLAIIVLSIVLLSGGF), 174–194 (PLYLALATWPSMMMWYTSTLA), 220–240 (ASPFALFFLAEYANIMLMNTL), 256–276 (ALFTIALMSKALLLTMSFLWV), and 296–316 (FLPMTLTLCLWHSSVPMSMFG).

This sequence belongs to the complex I subunit 1 family.

The protein resides in the mitochondrion inner membrane. It catalyses the reaction a ubiquinone + NADH + 5 H(+)(in) = a ubiquinol + NAD(+) + 4 H(+)(out). Core subunit of the mitochondrial membrane respiratory chain NADH dehydrogenase (Complex I) that is believed to belong to the minimal assembly required for catalysis. Complex I functions in the transfer of electrons from NADH to the respiratory chain. The immediate electron acceptor for the enzyme is believed to be ubiquinone. The chain is NADH-ubiquinone oxidoreductase chain 1 (MT-ND1) from Alligator mississippiensis (American alligator).